A 1464-amino-acid chain; its full sequence is DNA polymerase III PolC-type (1464 aa).

The Exonuclease domain occupies 426–582 (YVVFDVETTG…YDAEATGRLL (157 aa)).

It belongs to the DNA polymerase type-C family. PolC subfamily.

Its subcellular location is the cytoplasm. It carries out the reaction DNA(n) + a 2'-deoxyribonucleoside 5'-triphosphate = DNA(n+1) + diphosphate. Required for replicative DNA synthesis. This DNA polymerase also exhibits 3' to 5' exonuclease activity. The polypeptide is DNA polymerase III PolC-type (Streptococcus thermophilus (strain ATCC BAA-250 / LMG 18311)).